The sequence spans 535 residues: MKLWVSALLMAWFGVLSCVQAEFFTSIGHMTDLIYAEKELVQSLKEYILVEEAKLSKIKSWANKMEALTSKSAADAEGYLAHPVNAYKLVKRLNTDWPALEDLVLQDSAAGFIANLSVQRQFFPTDEDEIGAAKALMRLQDTYRLDPGTISRGELPGTKYQAMLSVDDCFGMGRSAYNEGDYYHTVLWMEQVLKQLDAGEEATTTKSQVLDYLSYAVFQLGDLHRALELTRRLLSLDPSHERAGGNLRYFEQLLEEEREKTLTNQTEAELATPEGIYERPVDYLPERDVYESLCRGEGVKLTPRRQKRLFCRYHHGNRAPQLLIAPFKEEDEWDSPHIVRYYDVMSDEEIERIKEIAKPKLARATVRDPKTGVLTVASYRVSKSSWLEEDDDPVVARVNRRMQHITGLTVKTAELLQVANYGVGGQYEPHFDFSRNDERDTFKHLGTGNRVATFLNYMSDVEAGGATVFPDLGAAIWPKKGTAVFWYNLLRSGEGDYRTRHAACPVLVGCKWVSNKWFHERGQEFLRPCGSTEVD.

The signal sequence occupies residues 1–21 (MKLWVSALLMAWFGVLSCVQA). N-linked (GlcNAc...) asparagine glycosylation is present at Asn-115. The TPR repeat unit spans residues 207-240 (SQVLDYLSYAVFQLGDLHRALELTRRLLSLDPSH). N-linked (GlcNAc...) asparagine glycosylation is present at Asn-264. The 109-residue stretch at 412-520 (TAELLQVANY…KWVSNKWFHE (109 aa)) folds into the Fe2OG dioxygenase domain. Residues His-430 and Asp-432 each coordinate Fe cation. An N6-succinyllysine modification is found at Lys-480. Position 501 (His-501) interacts with Fe cation. Lys-511 is a 2-oxoglutarate binding site.

It belongs to the P4HA family. In terms of assembly, heterotetramer of two alpha-2 chains and two beta chains (P4HB) (the beta chain is the multi-functional PDI), where P4HB plays the role of a structural subunit; this tetramer catalyzes the formation of 4-hydroxyproline in collagen. The cofactor is Fe(2+). L-ascorbate is required as a cofactor. Expressed in the heart, placenta, lung and pancreas.

The protein resides in the endoplasmic reticulum lumen. It carries out the reaction L-prolyl-[collagen] + 2-oxoglutarate + O2 = trans-4-hydroxy-L-prolyl-[collagen] + succinate + CO2. Its activity is regulated as follows. Inhibited by poly(L-proline) only at very high concentrations. In terms of biological role, catalyzes the post-translational formation of 4-hydroxyproline in -Xaa-Pro-Gly- sequences in collagens and other proteins. This is Prolyl 4-hydroxylase subunit alpha-2 (P4HA2) from Homo sapiens (Human).